Consider the following 338-residue polypeptide: Glycerol-3-phosphate dehydrogenase [NAD(P)+] (338 aa).

Residues Ser12, Trp13, Arg33, and Lys110 each contribute to the NADPH site. Sn-glycerol 3-phosphate is bound by residues Lys110, Gly141, and Ser143. Residue Ala145 participates in NADPH binding. Sn-glycerol 3-phosphate is bound by residues Lys196, Asp249, Ser259, Arg260, and Asn261. Lys196 functions as the Proton acceptor in the catalytic mechanism. Residue Arg260 participates in NADPH binding. NADPH-binding residues include Val284 and Glu286.

This sequence belongs to the NAD-dependent glycerol-3-phosphate dehydrogenase family.

The protein resides in the cytoplasm. It catalyses the reaction sn-glycerol 3-phosphate + NAD(+) = dihydroxyacetone phosphate + NADH + H(+). The enzyme catalyses sn-glycerol 3-phosphate + NADP(+) = dihydroxyacetone phosphate + NADPH + H(+). It participates in membrane lipid metabolism; glycerophospholipid metabolism. In terms of biological role, catalyzes the reduction of the glycolytic intermediate dihydroxyacetone phosphate (DHAP) to sn-glycerol 3-phosphate (G3P), the key precursor for phospholipid synthesis. This Limosilactobacillus reuteri (strain DSM 20016) (Lactobacillus reuteri) protein is Glycerol-3-phosphate dehydrogenase [NAD(P)+].